The following is a 282-amino-acid chain: NADPH-dependent 7-cyano-7-deazaguanine reductase (282 aa).

88–90 is a substrate binding site; sequence IES. 90–91 is an NADPH binding site; the sequence is SK. Catalysis depends on cysteine 190, which acts as the Thioimide intermediate. Aspartate 197 serves as the catalytic Proton donor. 229–230 serves as a coordination point for substrate; sequence HE. 258–259 contributes to the NADPH binding site; that stretch reads RG.

Belongs to the GTP cyclohydrolase I family. QueF type 2 subfamily. As to quaternary structure, homodimer.

The protein localises to the cytoplasm. It catalyses the reaction 7-aminomethyl-7-carbaguanine + 2 NADP(+) = 7-cyano-7-deazaguanine + 2 NADPH + 3 H(+). Its pathway is tRNA modification; tRNA-queuosine biosynthesis. Its function is as follows. Catalyzes the NADPH-dependent reduction of 7-cyano-7-deazaguanine (preQ0) to 7-aminomethyl-7-deazaguanine (preQ1). This Escherichia coli (strain UTI89 / UPEC) protein is NADPH-dependent 7-cyano-7-deazaguanine reductase.